The primary structure comprises 479 residues: Anaerobic nitric oxide reductase flavorubredoxin (479 aa).

The zinc metallo-hydrolase stretch occupies residues 30–210 (LRGSSYNSYL…PFSRLVTPKI (181 aa)). Residues H79, E81, D83, H147, D166, and H227 each coordinate Fe cation. A Flavodoxin-like domain is found at 254 to 393 (ITIFYDTMSN…LCREHGREIA (140 aa)). FMN contacts are provided by residues 260 to 264 (TMSNN) and 342 to 369 (AFGSHGWSGGAVDRLSTRLQDAGFEMSL). A Rubredoxin-like domain is found at 423-474 (GPRMQCSVCQWIYDPAKGEPMQDVAPGTPWSEVPDNFLCPECSLGKDVFDEL). The Fe cation site is built by C428, C431, C461, and C464.

It in the N-terminal section; belongs to the zinc metallo-hydrolase group 3 family. In terms of assembly, homotetramer. Fe cation is required as a cofactor. The cofactor is FMN.

The protein localises to the cytoplasm. It participates in nitrogen metabolism; nitric oxide reduction. Its function is as follows. Anaerobic nitric oxide reductase; uses NADH to detoxify nitric oxide (NO), protecting several 4Fe-4S NO-sensitive enzymes. Has at least 2 reductase partners, only one of which (NorW, flavorubredoxin reductase) has been identified. NO probably binds to the di-iron center; electrons enter from the NorW at rubredoxin and are transferred sequentially to the FMN center and the di-iron center. Also able to function as an aerobic oxygen reductase. This Shigella sonnei (strain Ss046) protein is Anaerobic nitric oxide reductase flavorubredoxin.